Reading from the N-terminus, the 610-residue chain is Dihydroxy-acid dehydratase (610 aa).

Mg(2+) is bound at residue Asp81. Cys122 contributes to the [2Fe-2S] cluster binding site. Residues Asp123 and Lys124 each coordinate Mg(2+). Lys124 is subject to N6-carboxylysine. [2Fe-2S] cluster is bound at residue Cys193. Glu489 serves as a coordination point for Mg(2+). Ser515 acts as the Proton acceptor in catalysis.

It belongs to the IlvD/Edd family. As to quaternary structure, homodimer. The cofactor is [2Fe-2S] cluster. Mg(2+) is required as a cofactor.

The enzyme catalyses (2R)-2,3-dihydroxy-3-methylbutanoate = 3-methyl-2-oxobutanoate + H2O. It carries out the reaction (2R,3R)-2,3-dihydroxy-3-methylpentanoate = (S)-3-methyl-2-oxopentanoate + H2O. Its pathway is amino-acid biosynthesis; L-isoleucine biosynthesis; L-isoleucine from 2-oxobutanoate: step 3/4. The protein operates within amino-acid biosynthesis; L-valine biosynthesis; L-valine from pyruvate: step 3/4. Its function is as follows. Functions in the biosynthesis of branched-chain amino acids. Catalyzes the dehydration of (2R,3R)-2,3-dihydroxy-3-methylpentanoate (2,3-dihydroxy-3-methylvalerate) into 2-oxo-3-methylpentanoate (2-oxo-3-methylvalerate) and of (2R)-2,3-dihydroxy-3-methylbutanoate (2,3-dihydroxyisovalerate) into 2-oxo-3-methylbutanoate (2-oxoisovalerate), the penultimate precursor to L-isoleucine and L-valine, respectively. The chain is Dihydroxy-acid dehydratase from Xylella fastidiosa (strain M12).